A 532-amino-acid chain; its full sequence is D-arabinono-1,4-lactone oxidase (532 aa).

In terms of domain architecture, FAD-binding PCMH-type spans 25–199; that stretch reads YSARPRLYFQ…VRATIRVVPA (175 aa). Position 62 is a pros-8alpha-FAD histidine (H62).

It belongs to the oxygen-dependent FAD-linked oxidoreductase family. Requires FAD as cofactor.

The protein localises to the mitochondrion membrane. The catalysed reaction is D-arabinono-1,4-lactone + O2 = dehydro-D-arabinono-1,4-lactone + H2O2 + H(+). Its pathway is cofactor biosynthesis; D-erythroascorbate biosynthesis; dehydro-D-arabinono-1,4-lactone from D-arabinose: step 2/2. This chain is D-arabinono-1,4-lactone oxidase (ALO1), found in Eremothecium gossypii (strain ATCC 10895 / CBS 109.51 / FGSC 9923 / NRRL Y-1056) (Yeast).